The following is a 246-amino-acid chain: tRNA (guanine-N(1)-)-methyltransferase (246 aa).

S-adenosyl-L-methionine contacts are provided by residues Gly-113 and 133-138; that span reads IGDYVL.

This sequence belongs to the RNA methyltransferase TrmD family. In terms of assembly, homodimer.

The protein localises to the cytoplasm. The catalysed reaction is guanosine(37) in tRNA + S-adenosyl-L-methionine = N(1)-methylguanosine(37) in tRNA + S-adenosyl-L-homocysteine + H(+). In terms of biological role, specifically methylates guanosine-37 in various tRNAs. In Haemophilus influenzae (strain PittGG), this protein is tRNA (guanine-N(1)-)-methyltransferase.